The sequence spans 266 residues: Ribonuclease HII (266 aa).

The tract at residues 19–38 (HPGMIRDKEKPAPTKPGKGV) is disordered. An RNase H type-2 domain is found at 58-246 (WPVAGCDEAG…VVAARQKHQP (189 aa)). Residues aspartate 64, glutamate 65, and aspartate 155 each coordinate a divalent metal cation.

The protein belongs to the RNase HII family. Mn(2+) serves as cofactor. Mg(2+) is required as a cofactor.

The protein resides in the cytoplasm. The catalysed reaction is Endonucleolytic cleavage to 5'-phosphomonoester.. Functionally, endonuclease that specifically degrades the RNA of RNA-DNA hybrids. The polypeptide is Ribonuclease HII (Rhodopseudomonas palustris (strain BisB18)).